The sequence spans 25 residues: Ocellatin-1 (25 aa).

Valine 25 is subject to Valine amide.

Expressed by the skin dorsal glands.

It localises to the secreted. In terms of biological role, has hemolytic activity against human erythrocytes and antibacterial activity against the Gram-negative bacterium E.coli. This is Ocellatin-1 from Leptodactylus ocellatus (Argus frog).